A 1407-amino-acid polypeptide reads, in one-letter code: MMISRGLFGWSPPHIQPLTPVSEVSEPPESPSPYLDPGAEHGGTGTAAQADDEEEMEEPEEMEPPPAAVPFSQLFACADRFDWVLMVFGSVAAAAHGTALIVYLHYFAKIVQVLAFPTDSDHLISDDQFNRLLELSLTIVYIAGGVFISGWIEVSCWILTGERQTAVIRSKYVQVLLNQDMSFFDTYGNNGDIVSQVLSDVLLIQSALSEKVGNYIHNMATFISGLIIGFVNCWEIALITLATGPFIVAAGGISNIFLHRLAENIQDAYAEAASIAEQAVSYVRTLYAFTNETLAKYSYATSLQATLRYGILISLVQGLGLGFTYGLAICSCAMQLWIGRFFVIHHRANGGEIITALFAVILSGLGLNQAATNFYSFDQGRIAAYRLFEMISRSSSGTNQEGIILSAVQGNIEFRNVYFSYLSRPEIPILSGFYLTVPAKKAVALVGRNGSGKSSIIPLMERFYDPTLGEVLLDGENIKNLKLEWLRSQIGLVTQEPALLSLSIRENIAYGRDATLDQIEEAAKKAHAHTFISSLEKGYETQVGKTGLTLTEEQKIKLSIARAVLLDPTILLLDEVTGGLDFEAERVVQEALDLLMLGRSTIIIARRLSLIRNADYIAVMEEGQLLEMGTHDELINLGNLYAELLKCEEATKLPRRMPVRNYNDSAAFQAERDSSAGRGFQEPSSPKMAKSPSLQRGHNVFRSQELCFNSEESPNDHSPAPEKLGENGSSLDVGEKEPTIKRQDSFEMRLPELPKIDIQCPQRQKSNGSDPESPISPLLISDPQNERSHSQTFSRPLGHSDDTSASVKVAKDGQHKEPPSFWRLAQLSFPEWLYAVLGSIGAAIFGSFNPLLAYVIALVVTTYYTSKGSHLREEVDKWCLIIACMGIVTVVANFLQHFYFGIMGEKMTERVRRMMFSAMLRNEVGWYDEEENSPDTLSMRLANDATFVRAAFSNRLSIFIQDSFAVIVAILIGLLLGWRLALVALATLPVLTLSAIAQKLWLAGFSKGIQEMHRKASLVLEDAVRNIYTVVAFCAGNKVMELYRLQLQRILRQSFFHGMAIGFAFGFSQFLLFACNALLLWYTALSVDRRYMKLSTALTEYMVFSFATFALVEPFGLAPYILKRRRSLASVFEIIDRVPTIEPDDTSALSPPNVYGSIELKNIDFCYPTRPEVLVLSNFSLKVNGGQTVAVVGVSGSGKSTIISLIERYYDPVAGQVLLDGRDLKSYNLRWLRSHMGLIQQEPIIFSTTIRENIIYARHNASEAEMKEAARIANAHHFISSLPHGYDTHIGMRGVELTQGQKQRIAIARVVLKNAPILLIDEASSSIESESSRVVQEALDTLIMGNKTTILIAHRVAMMRHVDNIVVLNGGKIVEEGTHDCLAGKNGLYVRLMQPHFGKNLRRHQLI.

The interval 18-65 is disordered; sequence LTPVSEVSEPPESPSPYLDPGAEHGGTGTAAQADDEEEMEEPEEMEPP. Residues 50–63 are compositionally biased toward acidic residues; it reads ADDEEEMEEPEEME. 4 helical membrane-spanning segments follow: residues 84–104, 139–159, 212–231, and 236–258; these read VLMV…IVYL, IVYI…CWIL, VGNY…IGFV, and IALI…NIFL. The ABC transmembrane type-1 1 domain maps to 86–379; that stretch reads MVFGSVAAAA…AATNFYSFDQ (294 aa). Asn-291 carries N-linked (GlcNAc...) asparagine glycosylation. The next 2 membrane-spanning stretches (helical) occupy residues 310 to 330 and 351 to 371; these read GILI…LAIC and GEII…NQAA. Positions 412-647 constitute an ABC transporter 1 domain; sequence IEFRNVYFSY…GNLYAELLKC (236 aa). 447–454 is an ATP binding site; that stretch reads GRNGSGKS. Residues Asn-449 and Asn-663 are each glycosylated (N-linked (GlcNAc...) asparagine). 2 disordered regions span residues 670 to 696 and 709 to 815; these read AERD…SLQR and NSEE…DGQH. Asn-727 carries N-linked (GlcNAc...) asparagine glycosylation. The span at 733-755 shows a compositional bias: basic and acidic residues; that stretch reads VGEKEPTIKRQDSFEMRLPELPK. A compositionally biased stretch (polar residues) spans 761–770; that stretch reads PQRQKSNGSD. Asn-767 is a glycosylation site (N-linked (GlcNAc...) asparagine). The 289-residue stretch at 835-1123 folds into the ABC transmembrane type-1 2 domain; sequence AVLGSIGAAI…PFGLAPYILK (289 aa). 6 consecutive transmembrane segments (helical) span residues 840-860, 880-900, 958-978, 982-1002, 1061-1081, and 1102-1122; these read IGAA…ALVV, LIIA…HFYF, IFIQ…LLGW, LVAL…KLWL, IGFA…LLLW, and MVFS…PYIL. The region spanning 1158-1395 is the ABC transporter 2 domain; the sequence is IELKNIDFCY…NGLYVRLMQP (238 aa). A glycan (N-linked (GlcNAc...) asparagine) is linked at Asn-1178. Position 1193–1200 (1193–1200) interacts with ATP; the sequence is GVSGSGKS. Asn-1260 and Asn-1346 each carry an N-linked (GlcNAc...) asparagine glycan.

Belongs to the ABC transporter superfamily. ABCB family. Multidrug resistance exporter (TC 3.A.1.201) subfamily. In terms of tissue distribution, expressed in aerial tissues.

The protein localises to the membrane. The enzyme catalyses (indol-3-yl)acetate(in) + ATP + H2O = (indol-3-yl)acetate(out) + ADP + phosphate + H(+). Functionally, probable auxin efflux transporter that contributes, together with ABCB20 and in a FKBP42/TWD1-dependent manner, to the regulation of leaf position and morphology, internode distribution, roots development, and inflorescence organization, probably by modulating auxin repartition. The polypeptide is ABC transporter B family member 6 (Arabidopsis thaliana (Mouse-ear cress)).